The primary structure comprises 58 residues: MNMKMNKCPDCKIYTMEDACPQCGGELKVIYPPKFSIEDKYGKYRRILKKEAMNKKDD.

Belongs to the NOP10 family.

Functionally, involved in ribosome biogenesis; more specifically in 18S rRNA pseudouridylation and in cleavage of pre-rRNA. The sequence is that of Ribosome biogenesis protein Nop10 from Methanobrevibacter smithii (strain ATCC 35061 / DSM 861 / OCM 144 / PS).